The primary structure comprises 500 residues: Histidine--tRNA ligase (500 aa).

It belongs to the class-II aminoacyl-tRNA synthetase family. Homodimer.

It localises to the cytoplasm. It carries out the reaction tRNA(His) + L-histidine + ATP = L-histidyl-tRNA(His) + AMP + diphosphate + H(+). This Ruegeria sp. (strain TM1040) (Silicibacter sp.) protein is Histidine--tRNA ligase.